The sequence spans 169 residues: ATP synthase subunit b (169 aa).

A helical membrane pass occupies residues 3–23 (IKILLLVLPFFAFASEHGGVN).

This sequence belongs to the ATPase B chain family. F-type ATPases have 2 components, F(1) - the catalytic core - and F(0) - the membrane proton channel. F(1) has five subunits: alpha(3), beta(3), gamma(1), delta(1), epsilon(1). F(0) has three main subunits: a(1), b(2) and c(10-14). The alpha and beta chains form an alternating ring which encloses part of the gamma chain. F(1) is attached to F(0) by a central stalk formed by the gamma and epsilon chains, while a peripheral stalk is formed by the delta and b chains.

The protein resides in the cell inner membrane. Functionally, f(1)F(0) ATP synthase produces ATP from ADP in the presence of a proton or sodium gradient. F-type ATPases consist of two structural domains, F(1) containing the extramembraneous catalytic core and F(0) containing the membrane proton channel, linked together by a central stalk and a peripheral stalk. During catalysis, ATP synthesis in the catalytic domain of F(1) is coupled via a rotary mechanism of the central stalk subunits to proton translocation. In terms of biological role, component of the F(0) channel, it forms part of the peripheral stalk, linking F(1) to F(0). This chain is ATP synthase subunit b, found in Campylobacter curvus (strain 525.92).